A 345-amino-acid polypeptide reads, in one-letter code: Protein GAMETE CELL DEFECTIVE 1, mitochondrial (345 aa).

A mitochondrion-targeting transit peptide spans 1 to 43; the sequence is MLALRKTLLHGRLPAAPPAAAAAAIASRIPALLRRLSSSPGDG. The segment at 36–81 is disordered; that stretch reads LSSSPGDGQGGDEWGSSWSTGITKEHFDGSDAAVGRPVTSPSKPVS.

In terms of tissue distribution, expressed in roots, stems, leaves and florets.

It is found in the mitochondrion. Essential for fertility (male and female gametophyte functions and development). Required for the integrity of female gametic mitochondria. Involved in embryo apical-basal patterning, and particularly dorsal-ventral patterning, during early embryogenesis, and endosperm free nucleus positioning and development as well as early endosperm development, probably by modulating the expression pattern of related genes (e.g. AL1, MYB3/AL2, CYP78A13/GE, PNH1, HAZ1, MPK6 and OSH1). Has function in triggering of endosperm programmed cell death (PCD) leading to syncytial endosperm cellularization and starchy endosperm cell maturation. Implicated in central vacuole dynamics necessary for microspore development leading to pollen production, and for pollen development and germination. The sequence is that of Protein GAMETE CELL DEFECTIVE 1, mitochondrial from Oryza sativa subsp. japonica (Rice).